Reading from the N-terminus, the 457-residue chain is Transmembrane protease serine 5 (457 aa).

A disordered region spans residues 1–21 (MSLMLDDQPPMEAQYAEEGPG). At 1–49 (MSLMLDDQPPMEAQYAEEGPGPGIFRAEPGDQQHPISQAVCWRSMRRGC) the chain is on the cytoplasmic side. The helical; Signal-anchor for type II membrane protein transmembrane segment at 50–70 (AVLGALGLLAGAGVGSWLLVL) threads the bilayer. Over 71–457 (YLCPAASQPI…IHDTAQDSLL (387 aa)) the chain is Extracellular. Positions 112-207 (FRINSEDFLL…SGQVVSLRCS (96 aa)) constitute an SRCR domain. 7 disulfides stabilise this stretch: Cys135-Cys196, Cys148-Cys206, Cys209-Cys328, Cys243-Cys259, Cys342-Cys411, Cys374-Cys390, and Cys401-Cys429. Residues Asn163, Asn170, and Asn195 are each glycosylated (N-linked (GlcNAc...) asparagine). Residues 218 to 453 (IVGGQSVAPG…FLDWIHDTAQ (236 aa)) enclose the Peptidase S1 domain. Catalysis depends on charge relay system residues His258 and Asp308. N-linked (GlcNAc...) asparagine glycans are attached at residues Asn319 and Asn375. Ser405 serves as the catalytic Charge relay system.

It belongs to the peptidase S1 family. In terms of tissue distribution, brain-specific. Predominantly expressed in neurons, in their axons, and at the synapses of motoneurons in the spinal cord.

It localises to the cell membrane. Its function is as follows. May play a role in hearing. The sequence is that of Transmembrane protease serine 5 (TMPRSS5) from Homo sapiens (Human).